The chain runs to 343 residues: Uroporphyrinogen decarboxylase (343 aa).

Substrate contacts are provided by residues 21–25 (RQAGR), Asp-71, Tyr-148, Ser-203, and His-316.

This sequence belongs to the uroporphyrinogen decarboxylase family. As to quaternary structure, homodimer.

It localises to the cytoplasm. The enzyme catalyses uroporphyrinogen III + 4 H(+) = coproporphyrinogen III + 4 CO2. It functions in the pathway porphyrin-containing compound metabolism; protoporphyrin-IX biosynthesis; coproporphyrinogen-III from 5-aminolevulinate: step 4/4. Catalyzes the decarboxylation of four acetate groups of uroporphyrinogen-III to yield coproporphyrinogen-III. This Campylobacter fetus subsp. fetus (strain 82-40) protein is Uroporphyrinogen decarboxylase.